Consider the following 328-residue polypeptide: tRNA dimethylallyltransferase (328 aa).

10–17 is an ATP binding site; that stretch reads GPTASGKT. 12 to 17 provides a ligand contact to substrate; the sequence is TASGKT.

Belongs to the IPP transferase family. Monomer. It depends on Mg(2+) as a cofactor.

It catalyses the reaction adenosine(37) in tRNA + dimethylallyl diphosphate = N(6)-dimethylallyladenosine(37) in tRNA + diphosphate. Functionally, catalyzes the transfer of a dimethylallyl group onto the adenine at position 37 in tRNAs that read codons beginning with uridine, leading to the formation of N6-(dimethylallyl)adenosine (i(6)A). The chain is tRNA dimethylallyltransferase from Bifidobacterium longum subsp. infantis (strain ATCC 15697 / DSM 20088 / JCM 1222 / NCTC 11817 / S12).